A 372-amino-acid polypeptide reads, in one-letter code: Glutamate 5-kinase (372 aa).

ATP is bound at residue Lys6. Substrate is bound by residues Ser46, Asp133, and Asn145. ATP-binding positions include 165–166 (TD) and 207–213 (TGGMYTK). The PUA domain occupies 272–350 (NGFLFVDEGA…HDIESILGYK (79 aa)).

This sequence belongs to the glutamate 5-kinase family.

It localises to the cytoplasm. It catalyses the reaction L-glutamate + ATP = L-glutamyl 5-phosphate + ADP. It participates in amino-acid biosynthesis; L-proline biosynthesis; L-glutamate 5-semialdehyde from L-glutamate: step 1/2. Catalyzes the transfer of a phosphate group to glutamate to form L-glutamate 5-phosphate. The polypeptide is Glutamate 5-kinase (Caldanaerobacter subterraneus subsp. tengcongensis (strain DSM 15242 / JCM 11007 / NBRC 100824 / MB4) (Thermoanaerobacter tengcongensis)).